Here is a 202-residue protein sequence, read N- to C-terminus: Small ribosomal subunit protein uS4c (202 aa).

The region spanning 90–153 (MRLDNVIFRL…KSETIISKNI (64 aa)) is the S4 RNA-binding domain.

Belongs to the universal ribosomal protein uS4 family. In terms of assembly, part of the 30S ribosomal subunit. Contacts protein S5. The interaction surface between S4 and S5 is involved in control of translational fidelity.

It localises to the plastid. Its subcellular location is the chloroplast. Functionally, one of the primary rRNA binding proteins, it binds directly to 16S rRNA where it nucleates assembly of the body of the 30S subunit. Its function is as follows. With S5 and S12 plays an important role in translational accuracy. The protein is Small ribosomal subunit protein uS4c (rps4) of Sphaerocarpos donnelli (Liverwort).